The following is a 678-amino-acid chain: THO complex subunit 5 homolog B (678 aa).

Disordered regions lie at residues 1 to 37 (MSSD…EEAE) and 294 to 329 (ALFK…VQLD). The Nuclear localization signal signature appears at 7–10 (KKRK). A compositionally biased stretch (basic and acidic residues) spans 14–37 (NRSEDGKRGRHDEQEGRYYSEEAE). The span at 301–314 (DSQDDESDSDAEEE) shows a compositional bias: acidic residues.

Belongs to the THOC5 family. In terms of assembly, component of the THO subcomplex, which is composed of thoc1, thoc2, thoc3, thoc5, thoc6 and thoc7. Component of the transcription/export (TREX) complex at least composed of alyref/thoc4, ddx39b, sarnp/cip29, chtop and the THO subcomplex. Interacts with thoc7.

Its subcellular location is the nucleus. It is found in the nucleus speckle. The protein resides in the cytoplasm. Component of the THO subcomplex of the TREX complex which is thought to couple mRNA transcription, processing and nuclear export, and which specifically associates with spliced mRNA and not with unspliced pre-mRNA. Plays a key structural role in the oligomerization of the THO-ddx39b complex. TREX is recruited to spliced mRNAs by a transcription-independent mechanism, binds to mRNA upstream of the exon-junction complex (EJC) and is recruited in a splicing- and cap-dependent manner to a region near the 5' end of the mRNA where it functions in mRNA export to the cytoplasm via the TAP/NXF1 pathway. May be involved in cell differentiation. This chain is THO complex subunit 5 homolog B (thoc5-b), found in Xenopus laevis (African clawed frog).